We begin with the raw amino-acid sequence, 555 residues long: Oxygen-dependent choline dehydrogenase (555 aa).

4-33 is an FAD binding site; sequence DYIIIGAGSAGNVLATRLTEDPDVTVLLLE. H473 functions as the Proton acceptor in the catalytic mechanism.

The protein belongs to the GMC oxidoreductase family. It depends on FAD as a cofactor.

The enzyme catalyses choline + A = betaine aldehyde + AH2. The catalysed reaction is betaine aldehyde + NAD(+) + H2O = glycine betaine + NADH + 2 H(+). It participates in amine and polyamine biosynthesis; betaine biosynthesis via choline pathway; betaine aldehyde from choline (cytochrome c reductase route): step 1/1. Involved in the biosynthesis of the osmoprotectant glycine betaine. Catalyzes the oxidation of choline to betaine aldehyde and betaine aldehyde to glycine betaine at the same rate. This is Oxygen-dependent choline dehydrogenase from Proteus mirabilis (strain HI4320).